The primary structure comprises 544 residues: Chaperonin GroEL (544 aa).

Residues 30–33 (TLGP), Lys-51, 87–91 (DGTTT), Gly-415, and Asp-495 contribute to the ATP site.

It belongs to the chaperonin (HSP60) family. As to quaternary structure, forms a cylinder of 14 subunits composed of two heptameric rings stacked back-to-back. Interacts with the co-chaperonin GroES.

The protein resides in the cytoplasm. It carries out the reaction ATP + H2O + a folded polypeptide = ADP + phosphate + an unfolded polypeptide.. In terms of biological role, together with its co-chaperonin GroES, plays an essential role in assisting protein folding. The GroEL-GroES system forms a nano-cage that allows encapsulation of the non-native substrate proteins and provides a physical environment optimized to promote and accelerate protein folding. The sequence is that of Chaperonin GroEL from Bartonella bacilliformis (strain ATCC 35685 / KC583 / Herrer 020/F12,63).